The chain runs to 633 residues: Transcriptional repressor p66-alpha (633 aa).

The span at 1–18 shows a compositional bias: basic and acidic residues; the sequence is MTEEACRTRSQKRALERD. 2 disordered regions span residues 1 to 59 and 73 to 119; these read MTEE…PTQG and RGEG…RVNG. A phosphothreonine mark is found at Thr20 and Thr49. Basic and acidic residues predominate over residues 86-99; the sequence is RTSHSDMKSERRPP. Lys93 is covalently cross-linked (Glycyl lysine isopeptide (Lys-Gly) (interchain with G-Cter in SUMO2)). A phosphoserine mark is found at Ser100, Ser107, Ser113, Ser114, and Ser137. The span at 108–119 shows a compositional bias: polar residues; that stretch reads DNEQPSSPRVNG. Positions 139 to 174 form a coiled coil; the sequence is EERERMIKQLKEELRLEEAKLVLLKKLRQSQIQKEA. A CR1; interaction with HDAC1, HDAC2, MBD2 and MTA2 region spans residues 144-178; the sequence is MIKQLKEELRLEEAKLVLLKKLRQSQIQKEATAQK. Positions 172–188 are enriched in polar residues; sequence KEATAQKPTGSVGSTVT. Residues 172–238 are disordered; the sequence is KEATAQKPTG…QASSKLGPQA (67 aa). A Glycyl lysine isopeptide (Lys-Gly) (interchain with G-Cter in SUMO2) cross-link involves residue Lys178. The interval 181 to 295 is interaction with ZMYND8; the sequence is GSVGSTVTTP…IIQQGLIRVA (115 aa). The residue at position 189 (Thr189) is a Phosphothreonine. Over residues 196–212 the composition is skewed to polar residues; the sequence is GTQNIPAGKPSLQTSSA. Lys204 participates in a covalent cross-link: Glycyl lysine isopeptide (Lys-Gly) (interchain with G-Cter in SUMO2). Arg225 is subject to Omega-N-methylarginine. Residues 228–238 are compositionally biased toward polar residues; sequence QQASSKLGPQA. A Glycyl lysine isopeptide (Lys-Gly) (interchain with G-Cter in SUMO2) cross-link involves residue Lys233. Omega-N-methylarginine occurs at positions 249, 258, and 273. Ser275 is subject to Phosphoserine. The residue at position 285 (Arg285) is an Omega-N-methylarginine. Residues Ser340 and Ser343 each carry the phosphoserine modification. The segment at 340 to 480 is CR2; histone tail-binding and interaction with CHD4 and CDK2AP1; it reads SPASRQAAAK…EIEQRLLQQG (141 aa). The GATA-type zinc finger occupies 411–464; sequence SREPYMCAQCKTDFTCRWREEKSGAIMCENCMTTNQKKALKVEHTSRLKAAFVK. Glycyl lysine isopeptide (Lys-Gly) (interchain with G-Cter in SUMO2) cross-links involve residues Lys464 and Lys487. Ser512 is modified (phosphoserine). Arg539 carries the post-translational modification Asymmetric dimethylarginine; alternate. Arg539 carries the omega-N-methylarginine; alternate modification. 2 positions are modified to phosphoserine: Ser546 and Ser548. A Glycyl lysine isopeptide (Lys-Gly) (interchain with G-Cter in SUMO2) cross-link involves residue Lys550. A Phosphoserine modification is found at Ser556. Residues 561–585 are disordered; that stretch reads VSRTGRHSERTVSAGKGSATSNWKK. A Glycyl lysine isopeptide (Lys-Gly) (interchain with G-Cter in SUMO2) cross-link involves residue Lys585. Ser598 carries the post-translational modification Phosphoserine. A Glycyl lysine isopeptide (Lys-Gly) (interchain with G-Cter in SUMO2) cross-link involves residue Lys605.

As to quaternary structure, homooligomer. Component of the nucleosome remodeling and deacetylase (NuRD) repressor complex, composed of core proteins MTA1, MTA2, MTA3, RBBP4, RBBP7, HDAC1, HDAC2, MBD2, MBD3, and peripherally associated proteins CDK2AP1, CDK2AP2, GATAD2A, GATAD2B, CHD3, CHD4 and CHD5. The exact stoichiometry of the NuRD complex is unknown, and some subunits such as MBD2 and MBD3, GATAD2A and GATAD2B, and CHD3, CHD4 and CHD5 define mutually exclusive NuRD complexes. Component of the MeCP1 histone deacetylase complex. Interacts with CDK2AP1. Interacts with CHD4. Interacts with ERCC6. Interacts with HDAC1. Interacts with HDAC2. Interacts with MBD2; this interaction is required for the enhancement of MBD2-mediated repression and for targeting to the chromatin. Interacts with MBD3. Interacts with MTA2. Interacts with ZMYND8. Interacts with histone tails, including that of histones H2A, H2B, H3 and H4, the interaction is reduced by histone acetylation. As to expression, ubiquitous, both in fetal and adult tissues.

It localises to the nucleus speckle. Its subcellular location is the nucleus. The protein resides in the chromosome. Transcriptional repressor. Acts as a component of the histone deacetylase NuRD complex which participates in the remodeling of chromatin. Enhances MBD2-mediated repression. Efficient repression requires the presence of GATAD2B. This chain is Transcriptional repressor p66-alpha (GATAD2A), found in Homo sapiens (Human).